Reading from the N-terminus, the 122-residue chain is S-adenosylmethionine decarboxylase proenzyme (122 aa).

The active-site Schiff-base intermediate with substrate; via pyruvic acid is the S61. At S61 the chain carries Pyruvic acid (Ser); by autocatalysis. The active-site Proton acceptor; for processing activity is H66. C81 functions as the Proton donor; for catalytic activity in the catalytic mechanism.

Belongs to the prokaryotic AdoMetDC family. Type 1 subfamily. Heterotetramer of two alpha and two beta chains arranged as a dimer of alpha/beta heterodimers. Pyruvate serves as cofactor. Post-translationally, is synthesized initially as an inactive proenzyme. Formation of the active enzyme involves a self-maturation process in which the active site pyruvoyl group is generated from an internal serine residue via an autocatalytic post-translational modification. Two non-identical subunits are generated from the proenzyme in this reaction, and the pyruvate is formed at the N-terminus of the alpha chain, which is derived from the carboxyl end of the proenzyme. The post-translation cleavage follows an unusual pathway, termed non-hydrolytic serinolysis, in which the side chain hydroxyl group of the serine supplies its oxygen atom to form the C-terminus of the beta chain, while the remainder of the serine residue undergoes an oxidative deamination to produce ammonia and the pyruvoyl group blocking the N-terminus of the alpha chain.

It catalyses the reaction S-adenosyl-L-methionine + H(+) = S-adenosyl 3-(methylsulfanyl)propylamine + CO2. Its pathway is amine and polyamine biosynthesis; S-adenosylmethioninamine biosynthesis; S-adenosylmethioninamine from S-adenosyl-L-methionine: step 1/1. Functionally, catalyzes the decarboxylation of S-adenosylmethionine to S-adenosylmethioninamine (dcAdoMet), the propylamine donor required for the synthesis of the polyamines spermine and spermidine from the diamine putrescine. This chain is S-adenosylmethionine decarboxylase proenzyme, found in Prochlorococcus marinus (strain MIT 9211).